The following is a 40-amino-acid chain: Ostricacin-3 (40 aa).

3 disulfide bridges follow: Cys-8/Cys-36, Cys-15/Cys-30, and Cys-20/Cys-37.

It is found in the secreted. In terms of biological role, has antibacterial activity against the Gram-positive bacterium S.aureus 1056 MRSA (MIC=2.78 ug/ml) and the Gram-negative bacterium E.coli O157:H7 (MIC=2.41 ug/ml). Does not have antifungal activity against the yeast C.albicans 3153A. This is Ostricacin-3 from Struthio camelus (Common ostrich).